We begin with the raw amino-acid sequence, 708 residues long: DNA ligase 2 (708 aa).

Residues 71-75 (DADYD), 121-122 (SL), and Glu153 contribute to the NAD(+) site. Lys155 (N6-AMP-lysine intermediate) is an active-site residue. The NAD(+) site is built by Arg176, Glu213, Lys330, and Lys354. Cys448, Cys451, Cys466, and Cys471 together coordinate Zn(2+). One can recognise a BRCT domain in the interval 627 to 708 (ADAGTLAGKE…LLRLAEAAPE (82 aa)).

This sequence belongs to the NAD-dependent DNA ligase family. LigA subfamily. The cofactor is Mg(2+). It depends on Mn(2+) as a cofactor.

The catalysed reaction is NAD(+) + (deoxyribonucleotide)n-3'-hydroxyl + 5'-phospho-(deoxyribonucleotide)m = (deoxyribonucleotide)n+m + AMP + beta-nicotinamide D-nucleotide.. In terms of biological role, DNA ligase that catalyzes the formation of phosphodiester linkages between 5'-phosphoryl and 3'-hydroxyl groups in double-stranded DNA using NAD as a coenzyme and as the energy source for the reaction. It is essential for DNA replication and repair of damaged DNA. This chain is DNA ligase 2, found in Opitutus terrae (strain DSM 11246 / JCM 15787 / PB90-1).